Reading from the N-terminus, the 331-residue chain is Beta-ketoacyl-[acyl-carrier-protein] synthase III (331 aa).

Residues Cys115 and His255 contribute to the active site. Residues Gln256–Arg260 form an ACP-binding region. Asn285 is an active-site residue.

Belongs to the thiolase-like superfamily. FabH family. Homodimer.

The protein resides in the cytoplasm. It catalyses the reaction malonyl-[ACP] + acetyl-CoA + H(+) = 3-oxobutanoyl-[ACP] + CO2 + CoA. The protein operates within lipid metabolism; fatty acid biosynthesis. Functionally, catalyzes the condensation reaction of fatty acid synthesis by the addition to an acyl acceptor of two carbons from malonyl-ACP. Catalyzes the first condensation reaction which initiates fatty acid synthesis and may therefore play a role in governing the total rate of fatty acid production. Possesses both acetoacetyl-ACP synthase and acetyl transacylase activities. Its substrate specificity determines the biosynthesis of branched-chain and/or straight-chain of fatty acids. In Helicobacter pylori (strain ATCC 700392 / 26695) (Campylobacter pylori), this protein is Beta-ketoacyl-[acyl-carrier-protein] synthase III.